We begin with the raw amino-acid sequence, 254 residues long: Bowman-Birk type bran trypsin inhibitor (254 aa).

The signal sequence occupies residues 1–22; the sequence is MSNTTMATSTILLFLLAGLAAA. A propeptide spanning residues 23–118 is cleaved from the precursor; sequence HGDGDTTIRL…KCTAALDGLS (96 aa). 3 repeats span residues 46 to 120, 121 to 187, and 188 to 251; these read KPWD…LSME, RPWK…FCTP, and RPWG…CKPR. Disulfide bonds link Cys125-Cys185, Cys126-Cys143, Cys152-Cys159, Cys156-Cys172, Cys193-Cys248, Cys194-Cys209, Cys199-Cys207, Cys216-Cys223, and Cys220-Cys236. The propeptide occupies 252 to 254; that stretch reads AEN.

The protein belongs to the Bowman-Birk serine protease inhibitor family.

The chain is Bowman-Birk type bran trypsin inhibitor (RBBI3.3) from Oryza sativa subsp. japonica (Rice).